A 26-amino-acid chain; its full sequence is Melittin (26 aa).

Residue Gly1 is modified to N-formylglycine; partial. The residue at position 26 (Gln26) is a Glutamine amide.

This sequence belongs to the melittin family. In terms of assembly, monomer (in solution and for integration into membranes), homotetramer (in solution and potentially as a toroidal pore in membranes), and potenially homomultimer (as a toroidal pore in membranes). Expressed by the venom gland.

The protein resides in the secreted. It is found in the target cell membrane. Its function is as follows. Main toxin of bee venom with strong hemolytic activity and antimicrobial activity. It has enhancing effects on bee venom phospholipase A2 activity. This amphipathic toxin binds to negatively charged membrane surface and forms pore by inserting into lipid bilayers inducing the leakage of ions and molecules and the enhancement of permeability that ultimately leads to cell lysis. It acts as a voltage-gated pore with higher selectivity for anions over cations. The ion conductance has been shown to be voltage-dependent. Self-association of melittin in membranes is promoted by high ionic strength, but not by the presence of negatively charged lipids. In vivo, intradermal injection into healthy human volunteers produce sharp pain sensation and an inflammatory response. It produces pain by activating primary nociceptor cells directly and indirectly due to its ability to activate plasma membrane phospholipase A2 and its pore-forming activity. This Apis florea (Dwarf honeybee) protein is Melittin (MELT).